The primary structure comprises 297 residues: Glycerol-3-phosphate dehydrogenase [NAD(P)+] (297 aa).

NADPH-binding residues include Trp11, Arg33, and Lys79. Sn-glycerol 3-phosphate is bound by residues Lys79, Gly107, and Ser109. An NADPH-binding site is contributed by Ala111. Sn-glycerol 3-phosphate is bound by residues Lys161, Asp214, Ser224, Arg225, and Asn226. Lys161 serves as the catalytic Proton acceptor. Arg225 contributes to the NADPH binding site. NADPH is bound by residues Val249 and Glu251.

The protein belongs to the NAD-dependent glycerol-3-phosphate dehydrogenase family.

The protein resides in the cytoplasm. The enzyme catalyses sn-glycerol 3-phosphate + NAD(+) = dihydroxyacetone phosphate + NADH + H(+). The catalysed reaction is sn-glycerol 3-phosphate + NADP(+) = dihydroxyacetone phosphate + NADPH + H(+). It participates in membrane lipid metabolism; glycerophospholipid metabolism. Functionally, catalyzes the reduction of the glycolytic intermediate dihydroxyacetone phosphate (DHAP) to sn-glycerol 3-phosphate (G3P), the key precursor for phospholipid synthesis. The sequence is that of Glycerol-3-phosphate dehydrogenase [NAD(P)+] from Campylobacter jejuni subsp. doylei (strain ATCC BAA-1458 / RM4099 / 269.97).